A 291-amino-acid polypeptide reads, in one-letter code: Neugrin (291 aa).

The signal sequence occupies residues 1–15 (MAVTLSLLLSGRVCA). Residues 27–49 (VADPGPIGREPDPDSDWEPEERE) form a disordered region. Residues 39–49 (PDSDWEPEERE) show a composition bias toward acidic residues. Position 41 is a phosphoserine (S41). An N-linked (GlcNAc...) asparagine glycan is attached at N158. Positions 224–270 (VAAPLGHPRELQKYSSDSESPRRTGNGALPSDQKLEELKAEEPGNFS) are disordered. The segment covering 256–265 (QKLEELKAEE) has biased composition (basic and acidic residues).

This sequence belongs to the neugrin family. Forms a regulatory protein-RNA complex, consisting of RCC1L, NGRN, RPUSD3, RPUSD4, TRUB2, FASTKD2 and 16S mt-rRNA. Interacts with 16S mt-rRNA; this interaction is direct.

The protein resides in the nucleus. The protein localises to the secreted. It localises to the mitochondrion membrane. In terms of biological role, plays an essential role in mitochondrial ribosome biogenesis. As a component of a functional protein-RNA module, consisting of RCC1L, NGRN, RPUSD3, RPUSD4, TRUB2, FASTKD2 and 16S mitochondrial ribosomal RNA (16S mt-rRNA), controls 16S mt-rRNA abundance and is required for intra-mitochondrial translation of core subunits of the oxidative phosphorylation system. The chain is Neugrin (NGRN) from Pongo abelii (Sumatran orangutan).